The following is a 419-amino-acid chain: eIF5-mimic protein 2-A (419 aa).

Positions 1 to 15 (MNNQKQQKPTLTGQR) are enriched in polar residues. Positions 1–29 (MNNQKQQKPTLTGQRFKTRKRDEKERFDP) are disordered. A W2 domain is found at 247-414 (NQQSIGARKE…KNAEEESESE (168 aa)).

This sequence belongs to the BZW family.

In terms of biological role, translation initiation regulator which may repress repeat-associated non-AUG (RAN) initiated translation probably by acting as a competitive inhibitor of eukaryotic translation initiation factor 5 (EIF5) function. Enhances histone H4 gene transcription but does not seem to bind DNA directly. The chain is eIF5-mimic protein 2-A (bzw1a) from Danio rerio (Zebrafish).